The sequence spans 73 residues: Putative antitoxin VapB21 (73 aa).

It belongs to the UPF0330 family.

Possibly the antitoxin component of a type II toxin-antitoxin (TA) system. Its cognate toxin is VapC21 (Potential). This chain is Putative antitoxin VapB21 (vapB21), found in Sulfurisphaera tokodaii (strain DSM 16993 / JCM 10545 / NBRC 100140 / 7) (Sulfolobus tokodaii).